An 870-amino-acid polypeptide reads, in one-letter code: DNA mismatch repair protein MutS (870 aa).

616 to 623 (GPNMAGKS) is an ATP binding site.

It belongs to the DNA mismatch repair MutS family.

In terms of biological role, this protein is involved in the repair of mismatches in DNA. It is possible that it carries out the mismatch recognition step. This protein has a weak ATPase activity. The polypeptide is DNA mismatch repair protein MutS (Parabacteroides distasonis (strain ATCC 8503 / DSM 20701 / CIP 104284 / JCM 5825 / NCTC 11152)).